A 558-amino-acid chain; its full sequence is Membrane protein insertase YidC (558 aa).

The next 6 membrane-spanning stretches (helical) occupy residues Val-6–Pro-26, Leu-326–Phe-348, Gly-355–Phe-377, Leu-424–Ile-444, Val-469–Ile-489, and Ile-512–Val-532.

Belongs to the OXA1/ALB3/YidC family. Type 1 subfamily. As to quaternary structure, interacts with the Sec translocase complex via SecD. Specifically interacts with transmembrane segments of nascent integral membrane proteins during membrane integration.

Its subcellular location is the cell inner membrane. Its function is as follows. Required for the insertion and/or proper folding and/or complex formation of integral membrane proteins into the membrane. Involved in integration of membrane proteins that insert both dependently and independently of the Sec translocase complex, as well as at least some lipoproteins. Aids folding of multispanning membrane proteins. The protein is Membrane protein insertase YidC of Pelagibacter ubique (strain HTCC1062).